Consider the following 126-residue polypeptide: Small ribosomal subunit protein uS11 (126 aa).

Belongs to the universal ribosomal protein uS11 family. As to quaternary structure, part of the 30S ribosomal subunit. Interacts with proteins S7 and S18. Binds to IF-3.

In terms of biological role, located on the platform of the 30S subunit, it bridges several disparate RNA helices of the 16S rRNA. Forms part of the Shine-Dalgarno cleft in the 70S ribosome. The chain is Small ribosomal subunit protein uS11 from Orientia tsutsugamushi (strain Boryong) (Rickettsia tsutsugamushi).